A 554-amino-acid chain; its full sequence is Polyamine aminopropyltransferase 2 (554 aa).

Residues 1–13 (MIEPHAPAPPGSP) show a composition bias toward pro residues. Residues 1–20 (MIEPHAPAPPGSPPSWGGPC) are disordered. Helical transmembrane passes span 37–57 (FLVL…ELEL), 69–89 (VTQA…GSLA), 106–126 (AALA…FAWT), 139–159 (ILLV…VPLL), 184–204 (VGAL…LGQL), and 206–226 (GALL…LGLF). Residues 235–516 (RWLLLTANAV…RTAPAPRLDP (282 aa)) are spermidine synthase. In terms of domain architecture, PABS spans 247–492 (ALLATATVLA…SVPGPRRAAA (246 aa)). Q281 is an S-methyl-5'-thioadenosine binding site. H313 and D335 together coordinate spermidine. S-methyl-5'-thioadenosine contacts are provided by residues E355 and 389 to 390 (DA). Residue D408 is the Proton acceptor of the active site. The tract at residues 476 to 495 (DTGPGPGSVPGPRRAAAGPP) is disordered. Low complexity predominate over residues 485–495 (PGPRRAAAGPP).

Belongs to the spermidine/spermine synthase family. In terms of assembly, homodimer or homotetramer.

It localises to the cell membrane. The enzyme catalyses S-adenosyl 3-(methylsulfanyl)propylamine + putrescine = S-methyl-5'-thioadenosine + spermidine + H(+). The protein operates within amine and polyamine biosynthesis; spermidine biosynthesis; spermidine from putrescine: step 1/1. In terms of biological role, catalyzes the irreversible transfer of a propylamine group from the amino donor S-adenosylmethioninamine (decarboxy-AdoMet) to putrescine (1,4-diaminobutane) to yield spermidine. The sequence is that of Polyamine aminopropyltransferase 2 from Streptomyces coelicolor (strain ATCC BAA-471 / A3(2) / M145).